The sequence spans 202 residues: Cytochrome c oxidase assembly protein CtaG (202 aa).

Residues 1–13 (MSDKAAAPKKQGR) are Cytoplasmic-facing. A helical; Signal-anchor for type II membrane protein transmembrane segment spans residues 14–36 (NNGAVVLMCLSFVFGMGAMSYAA). At 37–202 (VPLYRIFCQV…GGAEKVEKKL (166 aa)) the chain is on the periplasmic side. The segment at 183–202 (EGPKPLASNEGGAEKVEKKL) is disordered.

The protein belongs to the COX11/CtaG family.

The protein resides in the cell inner membrane. Its function is as follows. Exerts its effect at some terminal stage of cytochrome c oxidase synthesis, probably by being involved in the insertion of the copper B into subunit I. The sequence is that of Cytochrome c oxidase assembly protein CtaG from Rhizobium etli (strain CIAT 652).